The chain runs to 89 residues: Arminin 7519 (89 aa).

The first 18 residues, 1-18 (MRSTFAVLFLALIALTYS), serve as a signal peptide directing secretion. Residues 19-59 (KNYQDVKEEIKNEVENEILRDLGEDDDELDDNAQEAVNDAR) constitute a propeptide that is removed on maturation. Ala86 carries the post-translational modification Alanine amide.

Belongs to the arminin family. Expressed in entodermal epithelium along the body column.

Its subcellular location is the secreted. The protein localises to the target cell membrane. Functionally, antimicrobial peptide with a broad-spectrum antimicrobial activity. Keeps its antibacterial activity under a wide range of salt concentrations that mimic physiological conditions of human blood, which is surprising, since Hydra is an obligate freshwater animal with nearly no salt tolerance. Does not affect red blood cells. This is Arminin 7519 from Hydra vulgaris (Hydra).